The primary structure comprises 315 residues: Malate dehydrogenase (315 aa).

NAD(+) is bound by residues Gly7 to Gly12 and Asp32. Substrate-binding residues include Arg81 and Arg87. Residues Asn94 and Val117–Asn119 each bind NAD(+). 2 residues coordinate substrate: Asn119 and Arg150. His174 acts as the Proton acceptor in catalysis.

Belongs to the LDH/MDH superfamily. MDH type 3 family.

The catalysed reaction is (S)-malate + NAD(+) = oxaloacetate + NADH + H(+). Functionally, catalyzes the reversible oxidation of malate to oxaloacetate. This is Malate dehydrogenase from Neorickettsia sennetsu (strain ATCC VR-367 / Miyayama) (Ehrlichia sennetsu).